We begin with the raw amino-acid sequence, 163 residues long: Putative pre-16S rRNA nuclease (163 aa).

It belongs to the YqgF nuclease family.

The protein localises to the cytoplasm. Its function is as follows. Could be a nuclease involved in processing of the 5'-end of pre-16S rRNA. In Nitrobacter hamburgensis (strain DSM 10229 / NCIMB 13809 / X14), this protein is Putative pre-16S rRNA nuclease.